The primary structure comprises 668 residues: Bestrophin-3 (668 aa).

Over 1–31 (MTVTYSSKVANATFFGFHRLLLKWRGSIYKL) the chain is Cytoplasmic. Ala10 provides a ligand contact to Ca(2+). A helical transmembrane segment spans residues 32–51 (LYREFIVFAVLYTAISLVYR). Residues 52 to 60 (LLLTGVQKR) are Extracellular-facing. Residues 61-82 (YFEKLSIYCDRYAEQIPVTFVL) traverse the membrane as a helical segment. The Cytoplasmic segment spans residues 83-237 (GFYVTLVVNR…DWVGIPLVYT (155 aa)). The chain crosses the membrane as a helical span at residues 238–255 (QVVTLAVYTFFFACLIGR). Over 256–274 (QFLDPTKGYAGHDLDLYIP) the chain is Extracellular. Residues 275-288 (IFTLLQFFFYAGWL) form a helical membrane-spanning segment. Topologically, residues 289–668 (KVAEQLINPF…LNKETEESPK (380 aa)) are cytoplasmic. Ca(2+)-binding residues include Gln293, Asn296, Asp301, and Asp304. Disordered stretches follow at residues 400 to 454 (SAHE…KKSC), 473 to 493 (RETS…VRTS), and 532 to 570 (TGVQ…VSAS). The segment covering 425 to 436 (PRDDLSPARDLL) has biased composition (basic and acidic residues). Over residues 475–489 (TSQTSTLQSLTPQSS) the composition is skewed to low complexity. The span at 532-545 (TGVQPSKTEQQQGP) shows a compositional bias: polar residues.

Belongs to the anion channel-forming bestrophin (TC 1.A.46) family. Calcium-sensitive chloride channel subfamily. In terms of tissue distribution, present in skeletal muscle and weakly in brain, spinal cord, bone marrow and retina.

Its subcellular location is the cell membrane. It catalyses the reaction chloride(in) = chloride(out). Ligand-gated anion channel that allows the movement of chloride monoatomic anions across cell membranes when activated by calcium (Ca2+). The sequence is that of Bestrophin-3 from Homo sapiens (Human).